The primary structure comprises 153 residues: Pheromone-binding protein Gp-9 (153 aa).

The first 19 residues, 1–19 (MKTFVLHIFIFALVAFASA), serve as a signal peptide directing secretion. 3 cysteine pairs are disulfide-bonded: Cys-37/Cys-77, Cys-73/Cys-129, and Cys-118/Cys-138.

This sequence belongs to the PBP/GOBP family. As to quaternary structure, homodimer.

It is found in the secreted. Its function is as follows. Colony queen number, a major feature of social organization, is associated with worker genotype for Gp-9. Colonies are headed by either a single reproductive queen (monogyne form) or multiple queens (polygyne form). Differences in worker Gp-9 genotypes between social forms may cause differences in workers' abilities to recognize queens and regulate their numbers. This chain is Pheromone-binding protein Gp-9, found in Solenopsis tridens (Fire ant).